Consider the following 326-residue polypeptide: N-acetyl-gamma-glutamyl-phosphate reductase (326 aa).

The active site involves Cys-155.

It belongs to the NAGSA dehydrogenase family. Type 1 subfamily.

The protein localises to the cytoplasm. The enzyme catalyses N-acetyl-L-glutamate 5-semialdehyde + phosphate + NADP(+) = N-acetyl-L-glutamyl 5-phosphate + NADPH + H(+). Its pathway is amino-acid biosynthesis; L-arginine biosynthesis; N(2)-acetyl-L-ornithine from L-glutamate: step 3/4. Functionally, catalyzes the NADPH-dependent reduction of N-acetyl-5-glutamyl phosphate to yield N-acetyl-L-glutamate 5-semialdehyde. This chain is N-acetyl-gamma-glutamyl-phosphate reductase, found in Shewanella loihica (strain ATCC BAA-1088 / PV-4).